The sequence spans 404 residues: SL1278 acyltransferase Chp1 (404 aa).

Topologically, residues 1–42 are periplasmic; the sequence is MKCPGVSDCVATVRHDNVFAIAAGLRWSAAVPPLHKGDAVTK. The helical transmembrane segment at 43-63 threads the bilayer; that stretch reads LLVGAIAGGMLACAAILGDGI. The Cytoplasmic segment spans residues 64 to 404; that stretch reads ASADTALIVP…RGLLPKGKKH (341 aa). Positions 104-325 constitute a PE-PPE domain; that stretch reads PTATRHVVSY…LRPIIDRAYQ (222 aa).

It belongs to the mycobacterial PPE family.

Its subcellular location is the cell inner membrane. The catalysed reaction is 3 3'-(hydroxy)phthioceranyl-2'-palmitoyl(stearoyl)-2-O-sulfo-alpha,alpha-trehalose = 3,6,6'-tris-(hydroxy)phthioceranyl-2-palmitoyl(stearoyl)-2'-sulfo-alpha-alpha-trehalose + 2 2'-palmitoyl/stearoyl-2-O-sulfo-alpha,alpha-trehalose.. Activity is potentiated by the SL-1 transporter MmpL8. Inhibited by the lipase inhibitor tetrahydrolipstatin (THL). Its function is as follows. Involved in the final steps of the cell wall sulfolipid-1 (SL-1) biosynthesis. Catalyzes two successive acylations of the precursor 2-palmitoyl-3-(C43)-phthioceranyl-alpha, alpha'-D-trehalose-2'-sulfate (SL1278) to yield the tetraacylated sulfolipid SL-1. The polypeptide is SL1278 acyltransferase Chp1 (Mycobacterium tuberculosis (strain ATCC 25618 / H37Rv)).